The sequence spans 50 residues: Conotoxin Cal6.19 (50 aa).

The signal sequence occupies residues 1-22; sequence MKVTCVLVLTLMALTVCQVATA. Cystine bridges form between C24–C37, C30–C41, and C36–C46.

In terms of tissue distribution, expressed by the venom duct.

It is found in the secreted. Functionally, probable neurotoxin. This is Conotoxin Cal6.19 from Californiconus californicus (California cone).